A 353-amino-acid polypeptide reads, in one-letter code: UPF0283 membrane protein Spro_2618 (353 aa).

The next 3 helical transmembrane spans lie at M71–V91, I101–V121, and E214–W234.

This sequence belongs to the UPF0283 family.

The protein resides in the cell inner membrane. The chain is UPF0283 membrane protein Spro_2618 from Serratia proteamaculans (strain 568).